The primary structure comprises 163 residues: uncharacterized protein (163 aa).

Positions 1–54 are disordered; that stretch reads MGKSARLRRSQTSSPENVLLGKDSSDDPYRSDSETESNSSSGTESNMSSDSTTS. Positions 23–33 are enriched in basic and acidic residues; that stretch reads DSSDDPYRSDS. Low complexity predominate over residues 36 to 52; that stretch reads ESNSSSGTESNMSSDST. The stretch at 69 to 143 forms a coiled coil; the sequence is LRTELAEMEM…VEELESSTRE (75 aa).

This is an uncharacterized protein from Arabidopsis thaliana (Mouse-ear cress).